The chain runs to 508 residues: Zinc finger CCCH-type with G patch domain-containing protein (508 aa).

Residues 154–177 form a C3H1-type zinc finger; it reads PCNYYLEGECRFDETRCRYSHGAL. Residues 253–279 are disordered; it reads DDELSSDSEETNETDGSDAANESDMDD. The 47-residue stretch at 309-355 folds into the G-patch domain; that stretch reads TRGIGSKLMASMGYIHGTGLGSDGRGIVTPVSAQILPQGRSLDACME. Residues 486-495 are compositionally biased toward polar residues; the sequence is QAQESSLSKE. The interval 486-508 is disordered; the sequence is QAQESSLSKEQQTRKSKNKMFEF. Residues 499–508 show a composition bias toward basic residues; it reads RKSKNKMFEF.

The protein localises to the nucleus. In terms of biological role, transcription repressor. This chain is Zinc finger CCCH-type with G patch domain-containing protein, found in Drosophila virilis (Fruit fly).